Consider the following 335-residue polypeptide: Peflin (335 aa).

Over residues A23–R37 the composition is skewed to basic and acidic residues. Residues A23 to D92 form a disordered region. Residues V43 to V53 show a composition bias toward polar residues. EF-hand domains are found at residues K144 to S192, S198 to Y223, K224 to L259, I260 to L300, and T301 to F332. 3 residues coordinate Ca(2+): D170, R176, and E181. 5 residues coordinate Ca(2+): D237, N239, S241, T243, and E248.

As to quaternary structure, homodimer.

The protein localises to the cytoplasm. It localises to the nucleus. Its subcellular location is the bud tip. The protein resides in the bud neck. Functionally, calcium-binding protein that is required for polar bud growth and cell wall abscission. Can also bind zinc ions. The sequence is that of Peflin (PEF1) from Saccharomyces cerevisiae (strain ATCC 204508 / S288c) (Baker's yeast).